The sequence spans 266 residues: Putative carbamate hydrolase RutD (266 aa).

The protein belongs to the AB hydrolase superfamily. Hydrolase RutD family.

It carries out the reaction carbamate + 2 H(+) = NH4(+) + CO2. In terms of biological role, involved in pyrimidine catabolism. May facilitate the hydrolysis of carbamate, a reaction that can also occur spontaneously. The sequence is that of Putative carbamate hydrolase RutD from Escherichia coli O111:H- (strain 11128 / EHEC).